The primary structure comprises 320 residues: Biotin synthase (320 aa).

The region spanning 39 to 267 (NAIQLATLLS…KARVRLSAGR (229 aa)) is the Radical SAM core domain. [4Fe-4S] cluster-binding residues include Cys54, Cys58, and Cys61. [2Fe-2S] cluster contacts are provided by Cys98, Cys130, Cys190, and Arg262.

The protein belongs to the radical SAM superfamily. Biotin synthase family. As to quaternary structure, homodimer. The cofactor is [4Fe-4S] cluster. [2Fe-2S] cluster is required as a cofactor.

The catalysed reaction is (4R,5S)-dethiobiotin + (sulfur carrier)-SH + 2 reduced [2Fe-2S]-[ferredoxin] + 2 S-adenosyl-L-methionine = (sulfur carrier)-H + biotin + 2 5'-deoxyadenosine + 2 L-methionine + 2 oxidized [2Fe-2S]-[ferredoxin]. It functions in the pathway cofactor biosynthesis; biotin biosynthesis; biotin from 7,8-diaminononanoate: step 2/2. Its function is as follows. Catalyzes the conversion of dethiobiotin (DTB) to biotin by the insertion of a sulfur atom into dethiobiotin via a radical-based mechanism. This is Biotin synthase from Synechococcus elongatus (strain ATCC 33912 / PCC 7942 / FACHB-805) (Anacystis nidulans R2).